The primary structure comprises 206 residues: Pyridoxine/pyridoxamine 5'-phosphate oxidase (206 aa).

FMN contacts are provided by residues 53–58 (RMVLLK), 68–69 (YT), lysine 75, and glutamine 97. Residue lysine 58 coordinates substrate. Substrate contacts are provided by tyrosine 115, arginine 119, and serine 123. Residues 132–133 (QS) and tryptophan 177 contribute to the FMN site. 183 to 185 (RLH) provides a ligand contact to substrate. Arginine 187 contributes to the FMN binding site.

This sequence belongs to the pyridoxamine 5'-phosphate oxidase family. Homodimer. FMN is required as a cofactor.

The enzyme catalyses pyridoxamine 5'-phosphate + O2 + H2O = pyridoxal 5'-phosphate + H2O2 + NH4(+). It catalyses the reaction pyridoxine 5'-phosphate + O2 = pyridoxal 5'-phosphate + H2O2. It participates in cofactor metabolism; pyridoxal 5'-phosphate salvage; pyridoxal 5'-phosphate from pyridoxamine 5'-phosphate: step 1/1. Its pathway is cofactor metabolism; pyridoxal 5'-phosphate salvage; pyridoxal 5'-phosphate from pyridoxine 5'-phosphate: step 1/1. Functionally, catalyzes the oxidation of either pyridoxine 5'-phosphate (PNP) or pyridoxamine 5'-phosphate (PMP) into pyridoxal 5'-phosphate (PLP). The sequence is that of Pyridoxine/pyridoxamine 5'-phosphate oxidase from Rhizobium meliloti (strain 1021) (Ensifer meliloti).